Consider the following 159-residue polypeptide: MEKLSEKDKELIRGSWESLGKNKVPHGVVMFSRLFELDPELLTLFHYTTNCGSTQDCLSSPEFLEHVTKVMLVIDAAVSNLDDLPSLEDFLLNLGRKHQAVGVNTQSFAEVGESLLHMLQCSLGQAYTAPLRQAWLNLYSIVVAAMSQGWAKNGEDKAD.

A Globin domain is found at 3–151 (KLSEKDKELI…VVAAMSQGWA (149 aa)). Residues histidine 66 and histidine 98 each contribute to the heme b site.

This sequence belongs to the globin family. As to quaternary structure, monomer. Homodimers and homotetramers. Mainly monomeric but also detected as part of homodimers and homotetramers.

Its subcellular location is the cytoplasm. It is found in the cytosol. The protein resides in the mitochondrion matrix. The enzyme catalyses Fe(III)-heme b-[protein] + nitric oxide + H2O = Fe(II)-heme b-[protein] + nitrite + 2 H(+). Monomeric globin with a bis-histidyl six-coordinate heme-iron atom through which it can bind dioxygen, carbon monoxide and nitric oxide. Could help transport oxygen and increase its availability to the metabolically active neuronal tissues, though its low quantity in tissues as well as its high affinity for dioxygen, which may limit its oxygen-releasing ability, argue against it. The ferrous/deoxygenated form exhibits a nitrite reductase activity and it could produce nitric oxide which in turn inhibits cellular respiration in response to hypoxia. In its ferrous/deoxygenated state, it may also exhibit GDI (Guanine nucleotide Dissociation Inhibitor) activity toward heterotrimeric G-alpha proteins, thereby regulating signal transduction to facilitate neuroprotective responses in the wake of hypoxia and associated oxidative stress. The protein is Neuroglobin (ngb) of Dissostichus mawsoni (Antarctic cod).